We begin with the raw amino-acid sequence, 864 residues long: Leucine--tRNA ligase (864 aa).

Residues 42–52 carry the 'HIGH' region motif; that stretch reads PYPSGKLHMGH. The 'KMSKS' region signature appears at 619–623; that stretch reads KMSKS. Lysine 622 lines the ATP pocket.

Belongs to the class-I aminoacyl-tRNA synthetase family.

It is found in the cytoplasm. It carries out the reaction tRNA(Leu) + L-leucine + ATP = L-leucyl-tRNA(Leu) + AMP + diphosphate. The protein is Leucine--tRNA ligase of Wigglesworthia glossinidia brevipalpis.